We begin with the raw amino-acid sequence, 205 residues long: ATP-dependent Clp protease proteolytic subunit (205 aa).

Ser-107 acts as the Nucleophile in catalysis. His-132 is a catalytic residue.

Belongs to the peptidase S14 family. As to quaternary structure, fourteen ClpP subunits assemble into 2 heptameric rings which stack back to back to give a disk-like structure with a central cavity, resembling the structure of eukaryotic proteasomes.

The protein resides in the cytoplasm. It catalyses the reaction Hydrolysis of proteins to small peptides in the presence of ATP and magnesium. alpha-casein is the usual test substrate. In the absence of ATP, only oligopeptides shorter than five residues are hydrolyzed (such as succinyl-Leu-Tyr-|-NHMec, and Leu-Tyr-Leu-|-Tyr-Trp, in which cleavage of the -Tyr-|-Leu- and -Tyr-|-Trp bonds also occurs).. Cleaves peptides in various proteins in a process that requires ATP hydrolysis. Has a chymotrypsin-like activity. Plays a major role in the degradation of misfolded proteins. This chain is ATP-dependent Clp protease proteolytic subunit, found in Pseudoalteromonas translucida (strain TAC 125).